The primary structure comprises 476 residues: UDP-N-acetylmuramate--L-alanine ligase (476 aa).

Residue 126 to 132 (GAHGKTT) coordinates ATP.

It belongs to the MurCDEF family.

It localises to the cytoplasm. It catalyses the reaction UDP-N-acetyl-alpha-D-muramate + L-alanine + ATP = UDP-N-acetyl-alpha-D-muramoyl-L-alanine + ADP + phosphate + H(+). It functions in the pathway cell wall biogenesis; peptidoglycan biosynthesis. In terms of biological role, cell wall formation. The protein is UDP-N-acetylmuramate--L-alanine ligase of Psychrobacter sp. (strain PRwf-1).